Consider the following 134-residue polypeptide: Small ribosomal subunit protein uS11 (134 aa).

Belongs to the universal ribosomal protein uS11 family. Part of the 30S ribosomal subunit. Interacts with proteins S7 and S18. Binds to IF-3.

Functionally, located on the platform of the 30S subunit, it bridges several disparate RNA helices of the 16S rRNA. Forms part of the Shine-Dalgarno cleft in the 70S ribosome. The polypeptide is Small ribosomal subunit protein uS11 (Herminiimonas arsenicoxydans).